A 600-amino-acid chain; its full sequence is Elongation factor 4 (600 aa).

Residues 5 to 187 (KYIRNFSIVA…EIVEKIPAPE (183 aa)) form the tr-type G domain. GTP is bound by residues 17–22 (DHGKST) and 134–137 (NKVD).

This sequence belongs to the TRAFAC class translation factor GTPase superfamily. Classic translation factor GTPase family. LepA subfamily.

Its subcellular location is the cell membrane. It catalyses the reaction GTP + H2O = GDP + phosphate + H(+). Required for accurate and efficient protein synthesis under certain stress conditions. May act as a fidelity factor of the translation reaction, by catalyzing a one-codon backward translocation of tRNAs on improperly translocated ribosomes. Back-translocation proceeds from a post-translocation (POST) complex to a pre-translocation (PRE) complex, thus giving elongation factor G a second chance to translocate the tRNAs correctly. Binds to ribosomes in a GTP-dependent manner. The polypeptide is Elongation factor 4 (Clostridium perfringens (strain 13 / Type A)).